The chain runs to 1415 residues: DNA-directed RNA polymerase subunit beta' (1415 aa).

Positions 70, 72, 85, and 88 each coordinate Zn(2+). Positions 461, 463, and 465 each coordinate Mg(2+). Residues Cys-820, Cys-894, Cys-901, and Cys-904 each contribute to the Zn(2+) site.

This sequence belongs to the RNA polymerase beta' chain family. The RNAP catalytic core consists of 2 alpha, 1 beta, 1 beta' and 1 omega subunit. When a sigma factor is associated with the core the holoenzyme is formed, which can initiate transcription. The cofactor is Mg(2+). Requires Zn(2+) as cofactor.

The enzyme catalyses RNA(n) + a ribonucleoside 5'-triphosphate = RNA(n+1) + diphosphate. Functionally, DNA-dependent RNA polymerase catalyzes the transcription of DNA into RNA using the four ribonucleoside triphosphates as substrates. This Cupriavidus necator (strain ATCC 17699 / DSM 428 / KCTC 22496 / NCIMB 10442 / H16 / Stanier 337) (Ralstonia eutropha) protein is DNA-directed RNA polymerase subunit beta'.